Reading from the N-terminus, the 188-residue chain is Photosystem I assembly protein Ycf4 (188 aa).

2 helical membrane passes run 26 to 48 and 68 to 90; these read MLWA…SSYF and AALT…VFFL.

It belongs to the Ycf4 family.

It localises to the cellular thylakoid membrane. Seems to be required for the assembly of the photosystem I complex. The polypeptide is Photosystem I assembly protein Ycf4 (Picosynechococcus sp. (strain ATCC 27264 / PCC 7002 / PR-6) (Agmenellum quadruplicatum)).